The sequence spans 123 residues: uncharacterized protein (123 aa).

Residues 1-21 (MHIIAKSILLMAVSFLVIIFT) traverse the membrane as a helical segment.

The protein localises to the membrane. This is an uncharacterized protein from Methanocaldococcus jannaschii (strain ATCC 43067 / DSM 2661 / JAL-1 / JCM 10045 / NBRC 100440) (Methanococcus jannaschii).